A 53-amino-acid polypeptide reads, in one-letter code: uncharacterized protein (53 aa).

This is an uncharacterized protein from Rickettsia conorii (strain ATCC VR-613 / Malish 7).